A 217-amino-acid chain; its full sequence is Tectonin-1 (217 aa).

6 tandem repeats follow at residues 2–37 (VHWE…HWDG), 38–74 (HKWH…DRSN), 75–111 (NKWT…DHHH), 112–146 (NKWD…RWDG), 147–182 (SKVD…LKHG), and 183–217 (KDWE…KATL). The interval 2–217 (VHWEKHEGEL…KLHHIYKATL (216 aa)) is 6 X approximate tandem repeats.

This sequence belongs to the tectonin family.

The protein localises to the cell surface. It localises to the cytoplasmic vesicle membrane. Its function is as follows. Probably involved in bacterial recognition. May be a lectin that function as part of a transmembrane signaling complex during phagocytosis. The chain is Tectonin-1 (TECA) from Physarum polycephalum (Slime mold).